A 276-amino-acid polypeptide reads, in one-letter code: Secretagogin (276 aa).

EF-hand domains are found at residues 12-47 (LDAAGFWQIWQRFDADEKGYIEEKELDAFFHHVLTK), 58-93 (NVWKMKQQFMAAHDVSKDGHIQMKELACLFLSEDEN), 105-140 (DSSVEFMQIWRKYDADSSGFISAAELCNFLRDLFLH), 149-184 (KLEEYTGTMMKIFDKNKDGRLDLNDLARILALQENF), 197-232 (ERKRDFEKIFAHYDVSKTGALEGPEVDGFVKDMMEL), and 240-276 (VDLDKFREILLRHCDVNKDGKIQKSELALCLGLKINP). Ca(2+)-binding residues include D71, S73, D75, H77, E82, D118, D120, S122, E129, D162, N164, D166, R168, D173, D210, S212, T214, E221, D254, N256, D258, K260, and E265.

The protein localises to the cytoplasm. It localises to the secreted. The protein resides in the cytoplasmic vesicle. It is found in the secretory vesicle membrane. This chain is Secretagogin (SCGN), found in Sus scrofa (Pig).